The sequence spans 297 residues: Phosphatidylinositol N-acetylglucosaminyltransferase subunit C (297 aa).

The next 8 membrane-spanning stretches (helical) occupy residues 51–71 (VVFESSVVIQQLCSVCVFVVI), 80–100 (LAPHWLLGTGLASSLIGYVLF), 117–137 (WADLKSALVFITFTYGFSPVL), 153–173 (SVFMLLGHLIFFDYGANAAIV), 174–194 (SSTLSLNMAIFASVCLASRLP), 196–216 (SLHAFIMVTFAIQIFALWPML), 227–244 (SYVGVTLLFAFSAVGGLL), and 250–270 (GAVLFALLLMSISCLCPFYLI).

The protein belongs to the PIGC family. Component of the glycosylphosphatidylinositol-N-acetylglucosaminyltransferase (GPI-GnT) complex composed at least by PIGA, PIGC, PIGH, PIGP, PIGQ, PIGY and DPM2. Interacts with PIGQ. Interacts with the heterodimer PIGA:PIGH.

It is found in the endoplasmic reticulum membrane. Its pathway is glycolipid biosynthesis; glycosylphosphatidylinositol-anchor biosynthesis. In terms of biological role, part of the glycosylphosphatidylinositol-N-acetylglucosaminyltransferase (GPI-GnT) complex that catalyzes the transfer of N-acetylglucosamine from UDP-N-acetylglucosamine to phosphatidylinositol and participates in the first step of GPI biosynthesis. This Homo sapiens (Human) protein is Phosphatidylinositol N-acetylglucosaminyltransferase subunit C.